The primary structure comprises 654 residues: DNA ligase (654 aa).

Residues 31–35, 80–81, and glutamate 109 each bind NAD(+); these read DSEYD and SL. The active-site N6-AMP-lysine intermediate is the lysine 111. 4 residues coordinate NAD(+): arginine 132, glutamate 166, lysine 280, and lysine 304. Zn(2+) is bound by residues cysteine 398, cysteine 401, cysteine 416, and cysteine 421. Residues 579–654 form the BRCT domain; the sequence is NIEGILSGKT…IWSEQDLLDL (76 aa).

Belongs to the NAD-dependent DNA ligase family. LigA subfamily. It depends on Mg(2+) as a cofactor. The cofactor is Mn(2+).

It catalyses the reaction NAD(+) + (deoxyribonucleotide)n-3'-hydroxyl + 5'-phospho-(deoxyribonucleotide)m = (deoxyribonucleotide)n+m + AMP + beta-nicotinamide D-nucleotide.. Functionally, DNA ligase that catalyzes the formation of phosphodiester linkages between 5'-phosphoryl and 3'-hydroxyl groups in double-stranded DNA using NAD as a coenzyme and as the energy source for the reaction. It is essential for DNA replication and repair of damaged DNA. The polypeptide is DNA ligase (Lactococcus lactis subsp. lactis (strain IL1403) (Streptococcus lactis)).